A 247-amino-acid chain; its full sequence is C-type lectin domain family 7 member A (247 aa).

Residues 1–44 (MEYHPDLENLDEDGYTQLHFDSQSNTRIAVVSEKGSCAASPPWR) lie on the Cytoplasmic side of the membrane. The ITAM-like signature appears at 15–18 (YTQL). Residues 45–65 (LIAVILGILCLVILVIAVVLG) form a helical; Signal-anchor for type II membrane protein membrane-spanning segment. The Extracellular segment spans residues 66 to 247 (TMAIWRSNSG…YSICEKKFSM (182 aa)). Asn91 is a glycosylation site (N-linked (GlcNAc...) asparagine). Disulfide bonds link Cys120–Cys131, Cys148–Cys241, and Cys220–Cys233. Positions 127–242 (YEKSCYLFSM…CSVPSYSICE (116 aa)) constitute a C-type lectin domain. 146–153 (RQCWQLGS) is a binding site for (1,3-beta-D-glucosyl)n. Positions 157, 159, and 163 each coordinate a divalent metal cation. Glu195 provides a ligand contact to (1,3-beta-D-glucosyl)n. Residue Glu242 coordinates a divalent metal cation.

In terms of assembly, homodimer. Interacts with SYK; participates in leukocyte activation in presence of fungal pathogens. Interacts with CD37; this interaction controls CLEC7A-mediated IL-6 production. Interacts with RANBP9. Post-translationally, phosphorylated on tyrosine residues in response to beta-glucan binding. In terms of tissue distribution, highly expressed in peripheral blood leukocytes and dendritic cells. Detected in spleen, bone marrow, lung, muscle, stomach and placenta.

The protein localises to the cell membrane. The protein resides in the cytoplasm. Lectin that functions as a pattern recognizing receptor (PRR) specific for beta-1,3-linked and beta-1,6-linked glucans, which constitute cell wall constituents from pathogenic bacteria and fungi. Necessary for the TLR2-mediated inflammatory response and activation of NF-kappa-B: upon beta-glucan binding, recruits SYK via its ITAM motif and promotes a signaling cascade that activates some CARD domain-BCL10-MALT1 (CBM) signalosomes, leading to the activation of NF-kappa-B and MAP kinase p38 (MAPK11, MAPK12, MAPK13 and/or MAPK14) pathways which stimulate expression of genes encoding pro-inflammatory cytokines and chemokines. Enhances cytokine production in macrophages and dendritic cells. Mediates production of reactive oxygen species in the cell. Mediates phagocytosis of C.albicans conidia. Binds T-cells in a way that does not involve their surface glycans and plays a role in T-cell activation. Stimulates T-cell proliferation. Induces phosphorylation of SCIMP after binding beta-glucans. This chain is C-type lectin domain family 7 member A, found in Homo sapiens (Human).